The primary structure comprises 179 residues: Large ribosomal subunit protein uL5 (179 aa).

Belongs to the universal ribosomal protein uL5 family. Part of the 50S ribosomal subunit; part of the 5S rRNA/L5/L18/L25 subcomplex. Contacts the 5S rRNA and the P site tRNA. Forms a bridge to the 30S subunit in the 70S ribosome.

Functionally, this is one of the proteins that bind and probably mediate the attachment of the 5S RNA into the large ribosomal subunit, where it forms part of the central protuberance. In the 70S ribosome it contacts protein S13 of the 30S subunit (bridge B1b), connecting the 2 subunits; this bridge is implicated in subunit movement. Contacts the P site tRNA; the 5S rRNA and some of its associated proteins might help stabilize positioning of ribosome-bound tRNAs. This is Large ribosomal subunit protein uL5 from Listeria innocua serovar 6a (strain ATCC BAA-680 / CLIP 11262).